We begin with the raw amino-acid sequence, 172 residues long: Adenine phosphoribosyltransferase (172 aa).

Belongs to the purine/pyrimidine phosphoribosyltransferase family. Homodimer.

Its subcellular location is the cytoplasm. It carries out the reaction AMP + diphosphate = 5-phospho-alpha-D-ribose 1-diphosphate + adenine. It functions in the pathway purine metabolism; AMP biosynthesis via salvage pathway; AMP from adenine: step 1/1. In terms of biological role, catalyzes a salvage reaction resulting in the formation of AMP, that is energically less costly than de novo synthesis. This is Adenine phosphoribosyltransferase from Pediococcus pentosaceus (strain ATCC 25745 / CCUG 21536 / LMG 10740 / 183-1w).